A 137-amino-acid chain; its full sequence is Probable DNA-directed RNA polymerases I, II, and III subunit RPABC2 (137 aa).

Acidic residues-rich tracts occupy residues 1–27 and 34–43; these read MADE…VIEE and NEDEDDDNVD. Residues 1–43 form a disordered region; the sequence is MADEDDYQDMDNDDFVDDNEMEDVIEEDPQRPDNEDEDDDNVD.

It belongs to the archaeal Rpo6/eukaryotic RPB6 RNA polymerase subunit family. As to quaternary structure, component of the RNA polymerase I (Pol I), RNA polymerase II (Pol II) and RNA polymerase III (Pol III) complexes consisting of at least 13, 12 and 17 subunits, respectively.

It is found in the nucleus. Functionally, DNA-dependent RNA polymerases catalyze the transcription of DNA into RNA using the four ribonucleoside triphosphates as substrates. Common component of RNA polymerases I, II and III which synthesize ribosomal RNA precursors, mRNA precursors and many functional non-coding RNAs, and small RNAs, such as 5S rRNA and tRNAs, respectively. Pol II is the central component of the basal RNA polymerase II transcription machinery. Pols are composed of mobile elements that move relative to each other. In Pol II, RPB6 is part of the clamp element and together with parts of RPB1 and RPB2 forms a pocket to which the RPB4-RPB7 subcomplex binds. The sequence is that of Probable DNA-directed RNA polymerases I, II, and III subunit RPABC2 (rpb-6) from Caenorhabditis elegans.